Here is a 240-residue protein sequence, read N- to C-terminus: Ubiquitin domain-containing protein 2 (240 aa).

Positions 1–48 (MGGCVGSHHDSSGSLNENSDGTGVALGRNQPLKREKPKWKSDYPMTDG) are disordered. The segment covering 12-21 (SGSLNENSDG) has biased composition (polar residues). A compositionally biased stretch (basic and acidic residues) spans 32 to 41 (LKREKPKWKS). A Ubiquitin-like domain is found at 152–227 (CQLRLRLSTG…VQVIVSQPPT (76 aa)).

Its subcellular location is the cytoplasm. The sequence is that of Ubiquitin domain-containing protein 2 (ubtd2) from Danio rerio (Zebrafish).